The chain runs to 63 residues: Protease 2 small chain (63 aa).

Positions 11-63 constitute a Peptidase S8 domain; sequence QWGLSGTYGIRANTAWDNGYQGQGKIIAVVDTGITDHPDLLANRTSPLGYDFI.

It belongs to the peptidase S8 family. In terms of assembly, heterodimer of a large and a small chain.

Its subcellular location is the secreted. In Achromobacter lyticus, this protein is Protease 2 small chain.